An 80-amino-acid polypeptide reads, in one-letter code: Cytochrome c oxidase subunit 7B, mitochondrial (80 aa).

A mitochondrion-targeting transit peptide spans 1–24 (MFPLAKNALSRLRVQSIQQAVARQ). The Mitochondrial matrix portion of the chain corresponds to 25 to 32 (IHQKRAPD). The helical transmembrane segment at 33-59 (FHDKYGNAVLASGATFCVAVWVYMATQ) threads the bilayer. Topologically, residues 60–80 (IGIEWNPSPVGRVTPKEWREQ) are mitochondrial intermembrane.

The protein belongs to the cytochrome c oxidase VIIb family. In terms of assembly, component of the cytochrome c oxidase (complex IV, CIV), a multisubunit enzyme composed of 14 subunits. The complex is composed of a catalytic core of 3 subunits MT-CO1, MT-CO2 and MT-CO3, encoded in the mitochondrial DNA, and 11 supernumerary subunits COX4I1 (or COX4I2), COX5A, COX5B, COX6A2 (or COX6A1), COX6B1 (or COX6B2), COX6C, COX7A1 (or COX7A2), COX7B, COX7C, COX8B and NDUFA4, which are encoded in the nuclear genome. The complex exists as a monomer or a dimer and forms supercomplexes (SCs) in the inner mitochondrial membrane with NADH-ubiquinone oxidoreductase (complex I, CI) and ubiquinol-cytochrome c oxidoreductase (cytochrome b-c1 complex, complex III, CIII), resulting in different assemblies (supercomplex SCI(1)III(2)IV(1) and megacomplex MCI(2)III(2)IV(2)).

It is found in the mitochondrion inner membrane. The protein operates within energy metabolism; oxidative phosphorylation. In terms of biological role, component of the cytochrome c oxidase, the last enzyme in the mitochondrial electron transport chain which drives oxidative phosphorylation. The respiratory chain contains 3 multisubunit complexes succinate dehydrogenase (complex II, CII), ubiquinol-cytochrome c oxidoreductase (cytochrome b-c1 complex, complex III, CIII) and cytochrome c oxidase (complex IV, CIV), that cooperate to transfer electrons derived from NADH and succinate to molecular oxygen, creating an electrochemical gradient over the inner membrane that drives transmembrane transport and the ATP synthase. Cytochrome c oxidase is the component of the respiratory chain that catalyzes the reduction of oxygen to water. Electrons originating from reduced cytochrome c in the intermembrane space (IMS) are transferred via the dinuclear copper A center (CU(A)) of subunit 2 and heme A of subunit 1 to the active site in subunit 1, a binuclear center (BNC) formed by heme A3 and copper B (CU(B)). The BNC reduces molecular oxygen to 2 water molecules using 4 electrons from cytochrome c in the IMS and 4 protons from the mitochondrial matrix. Plays a role in proper central nervous system (CNS) development in vertebrates. The polypeptide is Cytochrome c oxidase subunit 7B, mitochondrial (COX7B) (Bos taurus (Bovine)).